Reading from the N-terminus, the 107-residue chain is Thioredoxin (107 aa).

In terms of domain architecture, Thioredoxin spans 2 to 107; that stretch reads DSIVHVTDDS…QLTAFLDSNX (106 aa). Cysteines 32 and 35 form a disulfide.

The protein belongs to the thioredoxin family.

Functionally, participates in various redox reactions through the reversible oxidation of its active center dithiol to a disulfide and catalyzes dithiol-disulfide exchange reactions. The chain is Thioredoxin (trxA) from Allochromatium vinosum (Chromatium vinosum).